Consider the following 297-residue polypeptide: HTH-type transcriptional regulator ArgP (297 aa).

The HTH lysR-type domain maps to 4 to 60 (PDYRTLQALDAVIRERGFERAAQKLCITQSAVSQRIKQLENMFGQPLLVRTVPPRPT). Positions 21–40 (FERAAQKLCITQSAVSQRIK) form a DNA-binding region, H-T-H motif.

This sequence belongs to the LysR transcriptional regulatory family. Homodimer.

Controls the transcription of genes involved in arginine and lysine metabolism. The protein is HTH-type transcriptional regulator ArgP of Salmonella choleraesuis (strain SC-B67).